A 208-amino-acid polypeptide reads, in one-letter code: Type 3 secretion system stator protein (208 aa).

It belongs to the SctL stator family. In terms of assembly, the core secretion machinery of the T3SS is composed of approximately 20 different proteins, including cytoplasmic components, a base, an export apparatus and a needle. This subunit is part of the cytosolic complex.

The protein localises to the cytoplasm. Its function is as follows. Component of the type III secretion system (T3SS), also called injectisome, which is used to inject bacterial effector proteins into eukaryotic host cells. Acts as a regulator of the HrcN/SctN ATPase activity. The polypeptide is Type 3 secretion system stator protein (Sinorhizobium fredii (strain NBRC 101917 / NGR234)).